Consider the following 90-residue polypeptide: Elongation factor 1-beta (90 aa).

Belongs to the EF-1-beta/EF-1-delta family.

Its function is as follows. Promotes the exchange of GDP for GTP in EF-1-alpha/GDP, thus allowing the regeneration of EF-1-alpha/GTP that could then be used to form the ternary complex EF-1-alpha/GTP/AAtRNA. The protein is Elongation factor 1-beta (ef1b) of Aeropyrum pernix (strain ATCC 700893 / DSM 11879 / JCM 9820 / NBRC 100138 / K1).